The following is a 193-amino-acid chain: Inosine triphosphate pyrophosphatase (193 aa).

Residue 10–15 (TGNANK) participates in ITP binding. A Mg(2+)-binding site is contributed by E42. Residues K54, 70–71 (DT), K87, 146–149 (FGWD), K169, and 174–175 (HR) contribute to the ITP site.

Belongs to the HAM1 NTPase family. As to quaternary structure, homodimer. The cofactor is Mg(2+). It depends on Mn(2+) as a cofactor.

The protein localises to the cytoplasm. It is found in the nucleus. It catalyses the reaction ITP + H2O = IMP + diphosphate + H(+). The catalysed reaction is dITP + H2O = dIMP + diphosphate + H(+). The enzyme catalyses XTP + H2O = XMP + diphosphate + H(+). Its function is as follows. Pyrophosphatase that hydrolyzes non-canonical purine nucleotides such as inosine triphosphate (ITP), deoxyinosine triphosphate (dITP) or xanthosine 5'-triphosphate (XTP) to their respective monophosphate derivatives. The enzyme does not distinguish between the deoxy- and ribose forms. Probably excludes non-canonical purines from RNA and DNA precursor pools, thus preventing their incorporation into RNA and DNA and avoiding chromosomal lesions. The sequence is that of Inosine triphosphate pyrophosphatase from Mycosarcoma maydis (Corn smut fungus).